A 161-amino-acid polypeptide reads, in one-letter code: Large-conductance mechanosensitive channel (161 aa).

The next 2 membrane-spanning stretches (helical) occupy residues 21–41 and 79–99; these read VGVI…DGVI and GAFI…FLLV. The span at 142–154 shows a compositional bias: low complexity; the sequence is TAAPKAAAAPVAK. The interval 142–161 is disordered; it reads TAAPKAAAAPVAKPKTKPKA.

It belongs to the MscL family. In terms of assembly, homopentamer.

It localises to the cell inner membrane. Its function is as follows. Channel that opens in response to stretch forces in the membrane lipid bilayer. May participate in the regulation of osmotic pressure changes within the cell. The polypeptide is Large-conductance mechanosensitive channel (Caulobacter sp. (strain K31)).